Here is a 247-residue protein sequence, read N- to C-terminus: Trypsin-4 (247 aa).

An N-terminal signal peptide occupies residues 1-15 (MKISIFFAFLGAAVA). Residues 16 to 23 (LPVNDDDK) constitute a propeptide, activation peptide. The Peptidase S1 domain occupies 24 to 245 (IVGGYTCPKH…YLSWIQETMA (222 aa)). 6 disulfides stabilise this stretch: Cys30-Cys161, Cys49-Cys65, Cys133-Cys234, Cys140-Cys207, Cys172-Cys186, and Cys197-Cys221. The Charge relay system role is filled by His64. Residues Glu76, Asn78, Val81, and Glu86 each coordinate Ca(2+). The active-site Charge relay system is the Asp108. The active-site Charge relay system is the Ser201.

It belongs to the peptidase S1 family. Requires Ca(2+) as cofactor. In terms of processing, proteolytically cleaved and activated by an autocatalytic mechanism. Cleavage by CTRC inhibits autoactivation.

The protein localises to the secreted. The protein resides in the extracellular space. It catalyses the reaction Preferential cleavage: Arg-|-Xaa, Lys-|-Xaa.. Activated by autocatalytic cleavage. Cleavage by CTRC inhibits autoactivation. Functionally, serine protease capable of autoactivation. This chain is Trypsin-4, found in Rattus norvegicus (Rat).